Here is a 436-residue protein sequence, read N- to C-terminus: Elongation factor 1-alpha (436 aa).

In terms of domain architecture, tr-type G spans 8-232; it reads KPHLNMIVTG…DDFKMAEKPV (225 aa). The G1 stretch occupies residues 17-24; the sequence is GHIDNGKS. 17 to 24 is a GTP binding site; it reads GHIDNGKS. Residue S24 participates in Mg(2+) binding. Residues 74–78 form a G2 region; it reads GITID. The G3 stretch occupies residues 95–98; sequence DAPG. GTP is bound by residues 95–99 and 157–160; these read DAPGH and NKMD. The G4 stretch occupies residues 157 to 160; sequence NKMD. The G5 stretch occupies residues 196-198; the sequence is SGW.

It belongs to the TRAFAC class translation factor GTPase superfamily. Classic translation factor GTPase family. EF-Tu/EF-1A subfamily.

It localises to the cytoplasm. It catalyses the reaction GTP + H2O = GDP + phosphate + H(+). In terms of biological role, GTP hydrolase that promotes the GTP-dependent binding of aminoacyl-tRNA to the A-site of ribosomes during protein biosynthesis. In Cenarchaeum symbiosum (strain A), this protein is Elongation factor 1-alpha.